Here is a 430-residue protein sequence, read N- to C-terminus: Trigger factor (430 aa).

One can recognise a PPIase FKBP-type domain in the interval 163–248; it reads GNIAIIDFKG…IKDIKVKELP (86 aa).

It belongs to the FKBP-type PPIase family. Tig subfamily.

Its subcellular location is the cytoplasm. The catalysed reaction is [protein]-peptidylproline (omega=180) = [protein]-peptidylproline (omega=0). Functionally, involved in protein export. Acts as a chaperone by maintaining the newly synthesized protein in an open conformation. Functions as a peptidyl-prolyl cis-trans isomerase. This chain is Trigger factor, found in Clostridium botulinum (strain Okra / Type B1).